Here is a 338-residue protein sequence, read N- to C-terminus: Lipoate-protein ligase A (338 aa).

A BPL/LPL catalytic domain is found at 29 to 216 (PATQRVLFLW…AFFAYYGERV (188 aa)). ATP is bound by residues R71, 76 to 79 (GAVF), and K134. K134 is a (R)-lipoate binding site.

It belongs to the LplA family. As to quaternary structure, monomer.

Its subcellular location is the cytoplasm. The catalysed reaction is L-lysyl-[lipoyl-carrier protein] + (R)-lipoate + ATP = N(6)-[(R)-lipoyl]-L-lysyl-[lipoyl-carrier protein] + AMP + diphosphate + H(+). The protein operates within protein modification; protein lipoylation via exogenous pathway; protein N(6)-(lipoyl)lysine from lipoate: step 1/2. It participates in protein modification; protein lipoylation via exogenous pathway; protein N(6)-(lipoyl)lysine from lipoate: step 2/2. Its function is as follows. Catalyzes both the ATP-dependent activation of exogenously supplied lipoate to lipoyl-AMP and the transfer of the activated lipoyl onto the lipoyl domains of lipoate-dependent enzymes. The protein is Lipoate-protein ligase A of Cronobacter sakazakii (strain ATCC BAA-894) (Enterobacter sakazakii).